The primary structure comprises 247 residues: Large ribosomal subunit protein uL30 (247 aa).

Belongs to the universal ribosomal protein uL30 family.

The protein is Large ribosomal subunit protein uL30 (RPL7L1) of Sus scrofa (Pig).